We begin with the raw amino-acid sequence, 232 residues long: Protein FAM246A (232 aa).

Disordered regions lie at residues 1–47, 153–178, and 191–232; these read MATP…RAPG, LPPP…RGPT, and AASR…GGGD. The span at 19-31 shows a compositional bias: basic and acidic residues; that stretch reads EVLRRVTGRRRDP. A compositionally biased stretch (basic residues) spans 211–220; sequence APVRKNHKKM.

This sequence belongs to the FAM246 family.

This Homo sapiens (Human) protein is Protein FAM246A.